Reading from the N-terminus, the 553-residue chain is Flagellar hook-associated protein 1 (553 aa).

This sequence belongs to the flagella basal body rod proteins family.

It localises to the secreted. The protein resides in the bacterial flagellum. The chain is Flagellar hook-associated protein 1 (flgK) from Salmonella typhi.